The sequence spans 125 residues: Holo-[acyl-carrier-protein] synthase (125 aa).

Mg(2+) is bound by residues aspartate 8 and glutamate 57.

It belongs to the P-Pant transferase superfamily. AcpS family. Mg(2+) is required as a cofactor.

Its subcellular location is the cytoplasm. It catalyses the reaction apo-[ACP] + CoA = holo-[ACP] + adenosine 3',5'-bisphosphate + H(+). Its function is as follows. Transfers the 4'-phosphopantetheine moiety from coenzyme A to a Ser of acyl-carrier-protein. This is Holo-[acyl-carrier-protein] synthase from Nitrosomonas europaea (strain ATCC 19718 / CIP 103999 / KCTC 2705 / NBRC 14298).